The sequence spans 230 residues: N-(5'-phosphoribosyl)anthranilate isomerase (230 aa).

The protein belongs to the TrpF family.

The enzyme catalyses N-(5-phospho-beta-D-ribosyl)anthranilate = 1-(2-carboxyphenylamino)-1-deoxy-D-ribulose 5-phosphate. It functions in the pathway amino-acid biosynthesis; L-tryptophan biosynthesis; L-tryptophan from chorismate: step 3/5. This is N-(5'-phosphoribosyl)anthranilate isomerase from Syntrophus aciditrophicus (strain SB).